Here is a 370-residue protein sequence, read N- to C-terminus: Putative alanine racemase 2 (370 aa).

Lys38 (proton acceptor; specific for D-alanine) is an active-site residue. Lys38 is subject to N6-(pyridoxal phosphate)lysine. Tyr266 serves as the catalytic Proton acceptor; specific for L-alanine.

This sequence belongs to the alanine racemase family. Pyridoxal 5'-phosphate is required as a cofactor.

It carries out the reaction L-alanine = D-alanine. The chain is Putative alanine racemase 2 (alr2) from Schizosaccharomyces pombe (strain 972 / ATCC 24843) (Fission yeast).